We begin with the raw amino-acid sequence, 513 residues long: ATP synthase subunit alpha (513 aa).

Residue 169-176 coordinates ATP; it reads GDRQTGKT.

The protein belongs to the ATPase alpha/beta chains family. In terms of assembly, F-type ATPases have 2 components, CF(1) - the catalytic core - and CF(0) - the membrane proton channel. CF(1) has five subunits: alpha(3), beta(3), gamma(1), delta(1), epsilon(1). CF(0) has three main subunits: a(1), b(2) and c(9-12). The alpha and beta chains form an alternating ring which encloses part of the gamma chain. CF(1) is attached to CF(0) by a central stalk formed by the gamma and epsilon chains, while a peripheral stalk is formed by the delta and b chains.

The protein localises to the cell inner membrane. It catalyses the reaction ATP + H2O + 4 H(+)(in) = ADP + phosphate + 5 H(+)(out). Functionally, produces ATP from ADP in the presence of a proton gradient across the membrane. The alpha chain is a regulatory subunit. The chain is ATP synthase subunit alpha from Klebsiella pneumoniae subsp. pneumoniae (strain ATCC 700721 / MGH 78578).